An 882-amino-acid chain; its full sequence is Translation initiation factor IF-2 (882 aa).

Residues 38–294 form a disordered region; sequence IEDSQASWVK…KSKHKRKKEN (257 aa). Basic and acidic residues-rich tracts occupy residues 66–76, 109–128, and 207–219; these read TRDEAVKKHSG, GRRE…ERHS, and PDNK…DAKR. Basic residues predominate over residues 282-292; it reads PGRKSKHKRKK. A tr-type G domain is found at 383 to 556; it reads ARPPVVTIMG…EMNEIRANPD (174 aa). Positions 392–399 are G1; sequence GHVDHGKT. Residue 392–399 participates in GTP binding; that stretch reads GHVDHGKT. Positions 417–421 are G2; the sequence is GITQH. Residues 438-441 are G3; the sequence is DTPG. GTP-binding positions include 438–442 and 492–495; these read DTPGH and NKID. The G4 stretch occupies residues 492–495; the sequence is NKID. Residues 528–530 form a G5 region; the sequence is SAK.

It belongs to the TRAFAC class translation factor GTPase superfamily. Classic translation factor GTPase family. IF-2 subfamily.

The protein resides in the cytoplasm. One of the essential components for the initiation of protein synthesis. Protects formylmethionyl-tRNA from spontaneous hydrolysis and promotes its binding to the 30S ribosomal subunits. Also involved in the hydrolysis of GTP during the formation of the 70S ribosomal complex. The chain is Translation initiation factor IF-2 from Syntrophomonas wolfei subsp. wolfei (strain DSM 2245B / Goettingen).